A 569-amino-acid polypeptide reads, in one-letter code: Glutamate--tRNA ligase (569 aa).

The 'HIGH' region signature appears at 108–118 (PNPDFVLHLGS).

This sequence belongs to the class-I aminoacyl-tRNA synthetase family. Glutamate--tRNA ligase type 2 subfamily.

The protein localises to the cytoplasm. The catalysed reaction is tRNA(Glu) + L-glutamate + ATP = L-glutamyl-tRNA(Glu) + AMP + diphosphate. Catalyzes the attachment of glutamate to tRNA(Glu) in a two-step reaction: glutamate is first activated by ATP to form Glu-AMP and then transferred to the acceptor end of tRNA(Glu). The protein is Glutamate--tRNA ligase of Thermofilum pendens (strain DSM 2475 / Hrk 5).